A 62-amino-acid polypeptide reads, in one-letter code: Large ribosomal subunit protein bL33 (62 aa).

The protein belongs to the bacterial ribosomal protein bL33 family.

This chain is Large ribosomal subunit protein bL33, found in Cyanothece sp. (strain PCC 7425 / ATCC 29141).